We begin with the raw amino-acid sequence, 261 residues long: 4-hydroxy-tetrahydrodipicolinate reductase (261 aa).

9-14 (GCLGRM) is an NAD(+) binding site. Arg36 contacts NADP(+). NAD(+) contacts are provided by residues 97 to 99 (GTT) and 118 to 121 (SANM). His151 acts as the Proton donor/acceptor in catalysis. His152 is a binding site for (S)-2,3,4,5-tetrahydrodipicolinate. Residue Lys155 is the Proton donor of the active site. 161-162 (GT) contributes to the (S)-2,3,4,5-tetrahydrodipicolinate binding site.

Belongs to the DapB family.

It is found in the cytoplasm. The catalysed reaction is (S)-2,3,4,5-tetrahydrodipicolinate + NAD(+) + H2O = (2S,4S)-4-hydroxy-2,3,4,5-tetrahydrodipicolinate + NADH + H(+). The enzyme catalyses (S)-2,3,4,5-tetrahydrodipicolinate + NADP(+) + H2O = (2S,4S)-4-hydroxy-2,3,4,5-tetrahydrodipicolinate + NADPH + H(+). It functions in the pathway amino-acid biosynthesis; L-lysine biosynthesis via DAP pathway; (S)-tetrahydrodipicolinate from L-aspartate: step 4/4. In terms of biological role, catalyzes the conversion of 4-hydroxy-tetrahydrodipicolinate (HTPA) to tetrahydrodipicolinate. The polypeptide is 4-hydroxy-tetrahydrodipicolinate reductase (Wolbachia pipientis wMel).